The chain runs to 437 residues: UDP-N-acetylmuramate--L-alanine ligase (437 aa).

108–114 (GAHGKTS) lines the ATP pocket.

This sequence belongs to the MurCDEF family.

Its subcellular location is the cytoplasm. The catalysed reaction is UDP-N-acetyl-alpha-D-muramate + L-alanine + ATP = UDP-N-acetyl-alpha-D-muramoyl-L-alanine + ADP + phosphate + H(+). It participates in cell wall biogenesis; peptidoglycan biosynthesis. Functionally, cell wall formation. The sequence is that of UDP-N-acetylmuramate--L-alanine ligase from Staphylococcus aureus.